Consider the following 245-residue polypeptide: Small ribosomal subunit protein uS3 (245 aa).

One can recognise a KH type-2 domain in the interval 21 to 92 (LNEFLTRELA…SVELYAEKVA (72 aa)). The segment at 215–245 (EEILPTTPVSEQKGAKPEVPVMPQGAPVPTA) is disordered.

It belongs to the universal ribosomal protein uS3 family.

Its subcellular location is the cytoplasm. It is found in the nucleus. It localises to the nucleolus. The protein localises to the mitochondrion inner membrane. The protein resides in the cytoskeleton. Its subcellular location is the spindle. The enzyme catalyses 2'-deoxyribonucleotide-(2'-deoxyribose 5'-phosphate)-2'-deoxyribonucleotide-DNA = a 3'-end 2'-deoxyribonucleotide-(2,3-dehydro-2,3-deoxyribose 5'-phosphate)-DNA + a 5'-end 5'-phospho-2'-deoxyribonucleoside-DNA + H(+). In terms of biological role, component of the small ribosomal subunit. The ribosome is a large ribonucleoprotein complex responsible for the synthesis of proteins in the cell. Has endonuclease activity and plays a role in repair of damaged DNA. Also involved in other processes including regulation of transcription, translation of its cognate mRNA, spindle formation and chromosome movement during mitosis, and apoptosis. In Ictalurus punctatus (Channel catfish), this protein is Small ribosomal subunit protein uS3 (rps3).